Reading from the N-terminus, the 265-residue chain is MQNPSAENSQPPLTEEQVIENLRQTEDFSDQYYAAWWLGRMRSRHPESLPLLLAALAPLHDNPIHDERRAVALNAIRALGILQARSAEEDLRSLLKNNDYSVREESARSLGMIQAKAAVQDLCELLSGAPDELEQAQSGSAKLKEPYESVLEALGSIGVASSSVITIIKPFTKHSRPLIRASALRALLLLTGEQAWAPPLIELLQHDDPLIRRGALLDLGATGWMPALPAIKAATVENSLKLVALRGLAEKSDDTTVLDAMDALL.

This sequence belongs to the CpcE/RpcE/PecE family.

Its function is as follows. An enzyme involved in the biosynthesis of bilin. Might be involved in the specific attachment of phycoerythrobilin (PEB) to the R-phycocyanin II beta chain. The protein is Bilin biosynthesis protein RpcE (rpcE) of Synechococcus sp. (strain WH8020).